The following is a 439-amino-acid chain: Histidinol dehydrogenase (439 aa).

Residues Y125, Q187, and N210 each coordinate NAD(+). The substrate site is built by T233, Q255, and H258. Zn(2+) contacts are provided by Q255 and H258. Active-site proton acceptor residues include E323 and H324. Substrate contacts are provided by H324, D357, E411, and H416. Residue D357 coordinates Zn(2+). Zn(2+) is bound at residue H416.

It belongs to the histidinol dehydrogenase family. The cofactor is Zn(2+).

It catalyses the reaction L-histidinol + 2 NAD(+) + H2O = L-histidine + 2 NADH + 3 H(+). The protein operates within amino-acid biosynthesis; L-histidine biosynthesis; L-histidine from 5-phospho-alpha-D-ribose 1-diphosphate: step 9/9. Functionally, catalyzes the sequential NAD-dependent oxidations of L-histidinol to L-histidinaldehyde and then to L-histidine. The protein is Histidinol dehydrogenase of Symbiobacterium thermophilum (strain DSM 24528 / JCM 14929 / IAM 14863 / T).